The following is a 767-amino-acid chain: Transducin-like enhancer protein 2 (767 aa).

A q domain region spans residues 1–152; sequence MYPQGRHPTP…SLLGQQNQLQ (152 aa). Positions 153–215 are GP domain; it reads PLSHAPPVPL…SRVDRAASRS (63 aa). Positions 198 to 212 are enriched in basic and acidic residues; sequence RVGVDAEGSRVDRAA. Disordered regions lie at residues 198 to 257, 264 to 283, and 296 to 346; these read RVGV…EEDK, VDEDQPSEPPSPVTTPCGKA, and SPAS…SSAS. Positions 216 to 279 are ccN domain; that stretch reads SSPSPPESLV…SEPPSPVTTP (64 aa). Residues 238–242 carry the Nuclear localization signal motif; that stretch reads KQQRA. Ser-253 carries the phosphoserine; by CK2 modification. Ser-274 is modified (phosphoserine; by CDK1). A Phosphothreonine; by CDK1 modification is found at Thr-278. Positions 280–447 are SP domain; it reads CGKAPLCIPA…VAKPAYSFHV (168 aa). Residues 296 to 309 are compositionally biased toward low complexity; sequence SPASLASSLGSPLP. Phosphoserine is present on Ser-306. A compositionally biased stretch (polar residues) spans 323–346; sequence TPASRSCGTSPPQDSSTPGPSSAS. 6 WD repeats span residues 479-517, 525-564, 569-608, 611-650, 693-732, and 734-766; these read AHGEVVCAVTISSSTQHVYTGGKGCVKVWDVGQPGSKTP, NRDNYIRSCKLLPDGQSLIVGGEASTLSIWDLAAPTPRIK, SSAPACYALAVSPDAKVCFSCCSDGNIVVWDLQNQAMVRQ, GHTDGASCIDISDYGTRLWTGGLDNTVRCWDLREGRQLQQ, LHESCVLSLKFASCGRWFVSTGKDNLLNAWRTPYGASIFQ, and KESSSVLSCDISRNNKYIVTGSGDKKATVYEVV.

It belongs to the WD repeat Groucho/TLE family. In terms of assembly, homooligomer and heterooligomer with other family members. Binds LEF1, TCF7, TCF7L1, TCF7L2, UTY, HES1 and HES5. Post-translationally, ubiquitinated by XIAP/BIRC4. In terms of tissue distribution, expressed in bone marrow-derived macrophages.

The protein resides in the nucleus. Functionally, transcriptional corepressor that binds to a number of transcription factors. Inhibits the transcriptional activation mediated by CTNNB1 and TCF family members in Wnt signaling. The effects of full-length TLE family members may be modulated by association with dominant-negative AES. This chain is Transducin-like enhancer protein 2 (Tle2), found in Mus musculus (Mouse).